A 1408-amino-acid polypeptide reads, in one-letter code: DNA-directed RNA polymerase subunit beta' (1408 aa).

Positions 70, 72, 85, and 88 each coordinate Zn(2+). 3 residues coordinate Mg(2+): D460, D462, and D464. 4 residues coordinate Zn(2+): C814, C888, C895, and C898.

The protein belongs to the RNA polymerase beta' chain family. The RNAP catalytic core consists of 2 alpha, 1 beta, 1 beta' and 1 omega subunit. When a sigma factor is associated with the core the holoenzyme is formed, which can initiate transcription. Mg(2+) is required as a cofactor. Requires Zn(2+) as cofactor.

It carries out the reaction RNA(n) + a ribonucleoside 5'-triphosphate = RNA(n+1) + diphosphate. In terms of biological role, DNA-dependent RNA polymerase catalyzes the transcription of DNA into RNA using the four ribonucleoside triphosphates as substrates. In Shewanella frigidimarina (strain NCIMB 400), this protein is DNA-directed RNA polymerase subunit beta'.